We begin with the raw amino-acid sequence, 261 residues long: tRNA pseudouridine synthase A (261 aa).

Catalysis depends on aspartate 52, which acts as the Nucleophile. Substrate is bound at residue tyrosine 110.

It belongs to the tRNA pseudouridine synthase TruA family. Homodimer.

The enzyme catalyses uridine(38/39/40) in tRNA = pseudouridine(38/39/40) in tRNA. In terms of biological role, formation of pseudouridine at positions 38, 39 and 40 in the anticodon stem and loop of transfer RNAs. The polypeptide is tRNA pseudouridine synthase A (Blochmanniella pennsylvanica (strain BPEN)).